A 623-amino-acid chain; its full sequence is Alpha-1,2-mannosyltransferase Alg9 (623 aa).

Transmembrane regions (helical) follow at residues 152-172, 193-223, 229-254, 266-284, 326-348, 360-378, 390-410, and 431-452; these read LIFY…ERYM, LFSV…AAWW, FAIF…PLVL, FVQW…MIAI, FLNF…IDYL, FPHY…VFFA, IYPL…RIFF, and FIAI…FALY.

The protein belongs to the glycosyltransferase 22 family.

Its subcellular location is the endoplasmic reticulum membrane. It carries out the reaction an alpha-D-Man-(1-&gt;2)-alpha-D-Man-(1-&gt;2)-alpha-D-Man-(1-&gt;3)-[alpha-D-Man-(1-&gt;3)-alpha-D-Man-(1-&gt;6)]-beta-D-Man-(1-&gt;4)-beta-D-GlcNAc-(1-&gt;4)-alpha-D-GlcNAc-diphospho-di-trans,poly-cis-dolichol + a di-trans,poly-cis-dolichyl beta-D-mannosyl phosphate = an alpha-D-Man-(1-&gt;2)-alpha-D-Man-(1-&gt;2)-alpha-D-Man-(1-&gt;3)-[alpha-D-Man-(1-&gt;2)-alpha-D-Man-(1-&gt;3)-alpha-D-Man-(1-&gt;6)]-beta-D-Man-(1-&gt;4)-beta-D-GlcNAc-(1-&gt;4)-alpha-D-GlcNAc-diphospho-di-trans,poly-cis-dolichol + a di-trans,poly-cis-dolichyl phosphate + H(+). The catalysed reaction is an alpha-D-Man-(1-&gt;2)-alpha-D-Man-(1-&gt;2)-alpha-D-Man-(1-&gt;3)-[alpha-D-Man-(1-&gt;2)-alpha-D-Man-(1-&gt;3)-[alpha-D-Man-(1-&gt;6)]-alpha-D-Man-(1-&gt;6)]-beta-D-Man-(1-&gt;4)-beta-D-GlcNAc-(1-&gt;4)-alpha-D-GlcNAc-diphospho-di-trans,poly-cis-dolichol + a di-trans,poly-cis-dolichyl beta-D-mannosyl phosphate = an alpha-D-Man-(1-&gt;2)-alpha-D-Man-(1-&gt;2)-alpha-D-Man-(1-&gt;3)-[alpha-D-Man-(1-&gt;2)-alpha-D-Man-(1-&gt;3)-[alpha-D-Man-(1-&gt;2)-alpha-D-Man-(1-&gt;6)]-alpha-D-Man-(1-&gt;6)]-beta-D-Man-(1-&gt;4)-beta-D-GlcNAc-(1-&gt;4)-alpha-D-GlcNAc-diphospho-di-trans,poly-cis-dolichol + a di-trans,poly-cis-dolichyl phosphate + H(+). It functions in the pathway protein modification; protein glycosylation. Probable alpha-1,2-mannosyltransferase involved in the N-glycosylation pathway. Probably involved in glycosylation of the TNF receptor grnd, regulating its ligand affinity. Required for normal epithelial growth and architecture. Suppressor of JNK-dependent intestinal stem cell proliferation. In Drosophila melanogaster (Fruit fly), this protein is Alpha-1,2-mannosyltransferase Alg9.